The following is a 408-amino-acid chain: Peptidase T (408 aa).

His78 serves as a coordination point for Zn(2+). Asp80 is a catalytic residue. Position 141 (Asp141) interacts with Zn(2+). Catalysis depends on Glu175, which acts as the Proton acceptor. Glu176, Asp198, and His380 together coordinate Zn(2+).

Belongs to the peptidase M20B family. It depends on Zn(2+) as a cofactor.

Its subcellular location is the cytoplasm. It carries out the reaction Release of the N-terminal residue from a tripeptide.. Functionally, cleaves the N-terminal amino acid of tripeptides. The chain is Peptidase T from Clostridium botulinum (strain 657 / Type Ba4).